The primary structure comprises 491 residues: Glutamyl-tRNA(Gln) amidotransferase subunit A (491 aa).

Residues Lys79 and Ser158 each act as charge relay system in the active site. The active-site Acyl-ester intermediate is the Ser182.

This sequence belongs to the amidase family. GatA subfamily. As to quaternary structure, heterotrimer of A, B and C subunits.

The catalysed reaction is L-glutamyl-tRNA(Gln) + L-glutamine + ATP + H2O = L-glutaminyl-tRNA(Gln) + L-glutamate + ADP + phosphate + H(+). Its function is as follows. Allows the formation of correctly charged Gln-tRNA(Gln) through the transamidation of misacylated Glu-tRNA(Gln) in organisms which lack glutaminyl-tRNA synthetase. The reaction takes place in the presence of glutamine and ATP through an activated gamma-phospho-Glu-tRNA(Gln). In Anaplasma phagocytophilum (strain HZ), this protein is Glutamyl-tRNA(Gln) amidotransferase subunit A.